A 523-amino-acid chain; its full sequence is Cytochrome P450 CYP82J17 (523 aa).

A helical membrane pass occupies residues Phe4–Trp24. Residue Cys462 participates in heme binding.

The protein belongs to the cytochrome P450 family. As to expression, mainly expressed in leaves and seed pods and, to a lower extent, in flowers and stems.

Its subcellular location is the membrane. The protein operates within steroid metabolism; cholesterol metabolism. Its function is as follows. Involved in the biosynthesis of spiroketal steroid and saponin natural products from cholesterol such as diosgenin and analogs (e.g. furostanol and spirostanol), plant defense compounds used as main precursors for the industrial production of steroid hormones. During the 5,6-spiroketalization of cholesterol, may catalyze the 27-monohydroxylation of furostanol-type steroid to an intermediate product that undergoes a stereospecific formation of the terminal heterocycle to yield diosgenin. In Trigonella foenum-graecum (Fenugreek), this protein is Cytochrome P450 CYP82J17.